We begin with the raw amino-acid sequence, 389 residues long: tRNA (guanine-N(7)-)-methyltransferase non-catalytic subunit TRM82 (389 aa).

WD repeat units lie at residues 44-86 (QNVP…HQLK), 134-179 (GHTS…KGFL), and 184-222 (QFVS…LITE).

The protein belongs to the WD repeat TRM82 family. As to quaternary structure, forms a heterodimer with the catalytic subunit TRM8.

Its subcellular location is the nucleus. The protein operates within tRNA modification; N(7)-methylguanine-tRNA biosynthesis. In terms of biological role, required for the formation of N(7)-methylguanine at position 46 (m7G46) in tRNA. In the complex, it is required to stabilize and induce conformational changes of the catalytic subunit. This is tRNA (guanine-N(7)-)-methyltransferase non-catalytic subunit TRM82 from Lodderomyces elongisporus (strain ATCC 11503 / CBS 2605 / JCM 1781 / NBRC 1676 / NRRL YB-4239) (Yeast).